The sequence spans 119 residues: Large ribosomal subunit protein bL19 (119 aa).

This sequence belongs to the bacterial ribosomal protein bL19 family.

Functionally, this protein is located at the 30S-50S ribosomal subunit interface and may play a role in the structure and function of the aminoacyl-tRNA binding site. The polypeptide is Large ribosomal subunit protein bL19 (Petrotoga mobilis (strain DSM 10674 / SJ95)).